Reading from the N-terminus, the 946-residue chain is Serine/arginine repetitive matrix protein 1 (946 aa).

An N-acetylmethionine modification is found at methionine 1. Residues 1 to 151 (MDAGFFRGTS…ASLKKQDEDK (151 aa)) form a necessary for DNA and RNA-binding region. The tract at residues 1–156 (MDAGFFRGTS…QDEDKDKRDK (156 aa)) is necessary for mRNA 3'-end cleavage and cytoplasmic accumulation. Arginine 7 is subject to Citrulline. In terms of domain architecture, PWI spans 27-126 (QLKFAECLEK…AGIPSAFLEL (100 aa)). Lysine 127 is covalently cross-linked (Glycyl lysine isopeptide (Lys-Gly) (interchain with G-Cter in SUMO2)). Lysine 140 is subject to N6-acetyllysine. Residues 142-170 (ASLKKQDEDKDKRDKEEKESSREKRERSR) show a composition bias toward basic and acidic residues. The disordered stretch occupies residues 142–946 (ASLKKQDEDK…MRKAQVSPQS (805 aa)). The segment covering 171–207 (SPRRRKSRSPSPRRRSSPVRRERKRSHSRSPRHRTKS) has biased composition (basic residues). The segment covering 214-234 (PEKKEKSPELPEPSVRMKDSS) has biased composition (basic and acidic residues). Residues serine 220 and serine 227 each carry the phosphoserine modification. Lysine 231 is covalently cross-linked (Glycyl lysine isopeptide (Lys-Gly) (interchain with G-Cter in SUMO1); alternate). A Glycyl lysine isopeptide (Lys-Gly) (interchain with G-Cter in SUMO2); alternate cross-link involves residue lysine 231. 2 positions are modified to phosphoserine: serine 234 and serine 240. Threonine 241 is modified (phosphothreonine). Positions 246–273 (KAPKPEPVPEPKEPSPEKNSKKEKEKTR) are enriched in basic and acidic residues. Lysine 249 is covalently cross-linked (Glycyl lysine isopeptide (Lys-Gly) (interchain with G-Cter in SUMO2)). Serine 260 is subject to Phosphoserine. Basic residues-rich tracts occupy residues 274 to 327 (PRSR…RTPP) and 334 to 349 (PRHR…RRRS). Positions 298 to 707 (RRHRSRSRSY…NKRHSPSPRP (410 aa)) are necessary for speckles and matrix localization. Low complexity predominate over residues 350-366 (SASLSGSSSSSSSSRSR). Phosphoserine occurs at positions 387, 389, 391, and 400. At threonine 404 the chain carries Phosphothreonine. At serine 412 the chain carries Phosphoserine. A Phosphothreonine modification is found at threonine 414. Phosphoserine is present on residues serine 418, serine 427, serine 429, and serine 434. The segment covering 426 to 436 (VSVSPGRTSGK) has biased composition (polar residues). Lysine 445 participates in a covalent cross-link: Glycyl lysine isopeptide (Lys-Gly) (interchain with G-Cter in SUMO2). 2 positions are modified to phosphoserine: serine 448 and serine 450. Residue lysine 457 forms a Glycyl lysine isopeptide (Lys-Gly) (interchain with G-Cter in SUMO2) linkage. Phosphoserine occurs at positions 461 and 463. Residue lysine 470 forms a Glycyl lysine isopeptide (Lys-Gly) (interchain with G-Cter in SUMO2) linkage. At serine 476 the chain carries Phosphoserine. Residues 476-499 (SVQQRRQYRRQNQQSSSDSGSSST) are compositionally biased toward low complexity. Positions 501-516 (EDERPKRSHVKNGEVG) are enriched in basic and acidic residues. Residues serine 522, serine 524, serine 526, serine 528, serine 530, serine 561, serine 563, serine 572, and serine 574 each carry the phosphoserine modification. The segment covering 555-572 (SSRRRRSPSPPPARRRRS) has biased composition (basic residues). The segment covering 574-585 (SPAPPPPPPPPP) has biased composition (pro residues). Over residues 586 to 611 (PRRRRSPTPPPRRRTPSPPPRRRSPS) the composition is skewed to basic residues. Threonine 593 and threonine 600 each carry phosphothreonine. Serine 602 is subject to Phosphoserine. Residues 612–624 (PRRYSPPIQRRYS) show a composition bias toward low complexity. The residue at position 615 (tyrosine 615) is a Phosphotyrosine. Residues serine 616, serine 624, and serine 626 each carry the phosphoserine modification. Threonine 633 carries the post-translational modification Phosphothreonine. Phosphoserine occurs at positions 635, 645, 647, 655, and 657. Basic residues predominate over residues 640–655 (PKRRASPSPPPKRRVS). Residues 668 to 682 (TKRRSPSLSSKHRKG) are compositionally biased toward basic residues. Positions 704 to 718 (SPRPRAPQTSSPPPV) are enriched in pro residues. Phosphoserine is present on residues serine 713, serine 714, serine 723, serine 725, serine 731, and serine 733. The segment covering 724-736 (ASPQGRQSPSPST) has biased composition (polar residues). Threonine 736 bears the Phosphothreonine mark. Phosphoserine is present on residues serine 779, serine 781, serine 789, serine 793, serine 795, serine 797, serine 810, serine 814, serine 816, and serine 818. A compositionally biased stretch (low complexity) spans 779–800 (SPSPQSVRRVSSSRSVSGSPEP). A Phosphothreonine modification is found at threonine 819. 2 positions are modified to phosphoserine: serine 822 and serine 832. The span at 833-842 (PTPSLSPARN) shows a compositional bias: polar residues. A Phosphothreonine modification is found at threonine 834. Residues serine 836, serine 838, and serine 843 each carry the phosphoserine modification. Positions 850–875 (KKKKKKKDKKHKKDKKHKKHKKHKKE) are enriched in basic residues. Over residues 878-907 (VTIATPATAAPAAVSAATTTSAQEEPAAAP) the composition is skewed to low complexity. Threonine 913 carries the phosphothreonine modification. Serine 915 is subject to Phosphoserine. Positions 924-934 (DLERHLREKAL) are enriched in basic and acidic residues. Serine 943 bears the Phosphoserine mark.

The protein belongs to the splicing factor SR family. Identified in the spliceosome C complex. Found in a pre-mRNA splicing complex with SFRS4, SFRS5, SNRP70, SNRPA1, SRRM1 and SRRM2. Component of the minor spliceosome, which splices U12-type introns. Found in a pre-mRNA exonic splicing enhancer (ESE) complex with SNRP70, SNRPA1, SRRM1 and TRA2B/SFRS10. Found in a mRNA splicing-dependent exon junction complex (EJC) with DEK, PRPF8, NCBP1, RBM8A, RNPS1, SRRM1 and ALYREF/THOC4. Interacts with DDX39B, CPSF1, RBM8A, RNPS1, and ALYREF/THOC4. Seems to be a compound of RNA export complexes that are released from speckles in a ATP-dependent manner. Post-translationally, citrullinated by PADI4. Phosphorylated on multiple serine and threonine residues by DYRK3 during the G2-to-M transition, after the nuclear-envelope breakdown. Phosphorylation by DYRK3 promotes disassembly of nuclear speckles.

It localises to the nucleus matrix. The protein localises to the nucleus speckle. Functionally, part of pre- and post-splicing multiprotein mRNP complexes. As a component of the minor spliceosome, involved in the splicing of U12-type introns in pre-mRNAs. Involved in numerous pre-mRNA processing events. Promotes constitutive and exonic splicing enhancer (ESE)-dependent splicing activation by bridging together sequence-specific (SR family proteins, SFRS4, SFRS5 and TRA2B/SFRS10) and basal snRNP (SNRP70 and SNRPA1) factors of the spliceosome. Stimulates mRNA 3'-end cleavage independently of the formation of an exon junction complex. Binds both pre-mRNA and spliced mRNA 20-25 nt upstream of exon-exon junctions. Binds RNA and DNA with low sequence specificity and has similar preference for either double- or single-stranded nucleic acid substrates. The protein is Serine/arginine repetitive matrix protein 1 (Srrm1) of Mus musculus (Mouse).